Here is a 149-residue protein sequence, read N- to C-terminus: Transcriptional repressor NrdR (149 aa).

A zinc finger lies at 3–34; the sequence is CPFCCAVDTKVIDSRLVGEGSSVRRRRQCVVC. Residues 49–139 enclose the ATP-cone domain; the sequence is PRVVKSNDVR…VYRSFEDIRE (91 aa).

The protein belongs to the NrdR family. The cofactor is Zn(2+).

Its function is as follows. Negatively regulates transcription of bacterial ribonucleotide reductase nrd genes and operons by binding to NrdR-boxes. This is Transcriptional repressor NrdR from Erwinia tasmaniensis (strain DSM 17950 / CFBP 7177 / CIP 109463 / NCPPB 4357 / Et1/99).